The primary structure comprises 633 residues: Threonine--tRNA ligase (633 aa).

Positions 1–61 (MPAIRLPDGS…DHDVDLAIVT (61 aa)) constitute a TGS domain. The interval 242-533 (DHRKLGRQLD…LIEHHAGAMP (292 aa)) is catalytic. 3 residues coordinate Zn(2+): Cys-333, His-384, and His-510.

This sequence belongs to the class-II aminoacyl-tRNA synthetase family. Homodimer. Requires Zn(2+) as cofactor.

The protein localises to the cytoplasm. It catalyses the reaction tRNA(Thr) + L-threonine + ATP = L-threonyl-tRNA(Thr) + AMP + diphosphate + H(+). Functionally, catalyzes the attachment of threonine to tRNA(Thr) in a two-step reaction: L-threonine is first activated by ATP to form Thr-AMP and then transferred to the acceptor end of tRNA(Thr). Also edits incorrectly charged L-seryl-tRNA(Thr). This chain is Threonine--tRNA ligase, found in Laribacter hongkongensis (strain HLHK9).